The following is a 354-amino-acid chain: Threonine synthase (354 aa).

Lys-61 bears the N6-(pyridoxal phosphate)lysine mark. Residues Asn-87, 187 to 191, and Thr-316 contribute to the pyridoxal 5'-phosphate site; that span reads GNAGN.

This sequence belongs to the threonine synthase family. Pyridoxal 5'-phosphate is required as a cofactor.

The catalysed reaction is O-phospho-L-homoserine + H2O = L-threonine + phosphate. Its pathway is amino-acid biosynthesis; L-threonine biosynthesis; L-threonine from L-aspartate: step 5/5. Catalyzes the gamma-elimination of phosphate from L-phosphohomoserine and the beta-addition of water to produce L-threonine. The protein is Threonine synthase (thrC) of Halalkalibacterium halodurans (strain ATCC BAA-125 / DSM 18197 / FERM 7344 / JCM 9153 / C-125) (Bacillus halodurans).